Here is a 664-residue protein sequence, read N- to C-terminus: Macoilin (664 aa).

Transmembrane regions (helical) follow at residues 28-48, 75-95, 120-140, and 154-174; these read TFLY…DFVL, AFSV…LLFI, VCLP…AIRF, and FAAH…KSYV. Residues 253–265 are compositionally biased toward basic and acidic residues; sequence REKGKEKDKDAKK. Residues 253 to 274 form a disordered region; that stretch reads REKGKEKDKDAKKHNLGINNNN. Residue S305 is modified to Phosphoserine. A compositionally biased stretch (polar residues) spans 320-348; sequence KNYKNASGVVNSSPRSHSATNGSIPSSSS. The tract at residues 320-367 is disordered; the sequence is KNYKNASGVVNSSPRSHSATNGSIPSSSSKNEKKQKCTSKSPSAHKDL. N-linked (GlcNAc...) asparagine glycosylation is present at N324. Residue S332 is modified to Phosphoserine. N340 and N452 each carry an N-linked (GlcNAc...) asparagine glycan. Phosphoserine is present on residues S631 and S634. The interval 631–664 is disordered; the sequence is SPLSPVSPHYSSKFVETSPSGLDPNASVYQPLKK. N655 carries N-linked (GlcNAc...) asparagine glycosylation.

It belongs to the macoilin family.

It localises to the rough endoplasmic reticulum membrane. It is found in the nucleus membrane. Its function is as follows. Plays a role in the regulation of neuronal activity. The protein is Macoilin (MACO1) of Bos taurus (Bovine).